Here is a 111-residue protein sequence, read N- to C-terminus: Probable 4-amino-4-deoxy-L-arabinose-phosphoundecaprenol flippase subunit ArnE (111 aa).

Transmembrane regions (helical) follow at residues 38 to 58 (LWLG…LLVL), 61 to 81 (LPVG…TLAA), and 91 to 111 (PRHW…GSAA). Residues 40–109 (LGLALICMGA…IISGIIILGS (70 aa)) form the EamA domain.

This sequence belongs to the ArnE family. Heterodimer of ArnE and ArnF.

The protein resides in the cell inner membrane. The protein operates within bacterial outer membrane biogenesis; lipopolysaccharide biosynthesis. In terms of biological role, translocates 4-amino-4-deoxy-L-arabinose-phosphoundecaprenol (alpha-L-Ara4N-phosphoundecaprenol) from the cytoplasmic to the periplasmic side of the inner membrane. The polypeptide is Probable 4-amino-4-deoxy-L-arabinose-phosphoundecaprenol flippase subunit ArnE (Salmonella paratyphi B (strain ATCC BAA-1250 / SPB7)).